We begin with the raw amino-acid sequence, 78 residues long: MSQVCQVTGKRPVVGNNRSHARNATRRRFLPNLQSHRFWVESEKRWVKLRISTKGMRIIDKNGIDTVLADLRGRGVKV.

Residues 1–20 (MSQVCQVTGKRPVVGNNRSH) are disordered.

This sequence belongs to the bacterial ribosomal protein bL28 family.

The protein is Large ribosomal subunit protein bL28 of Idiomarina loihiensis (strain ATCC BAA-735 / DSM 15497 / L2-TR).